Reading from the N-terminus, the 763-residue chain is Phosphoglycerol transferase I (763 aa).

Transmembrane regions (helical) follow at residues 1–21, 26–46, 77–97, and 108–128; these read MSELLSVALFLASVLIYAWKA, WWFAATLTVLGLFVILNITLY, ILPGIGIALALVAVFGALGWI, and VGYSLLALLLALGSVDASPAF.

The protein belongs to the OpgB family.

It localises to the cell inner membrane. The catalysed reaction is a phosphatidylglycerol + a membrane-derived-oligosaccharide D-glucose = a 1,2-diacyl-sn-glycerol + a membrane-derived-oligosaccharide 6-(glycerophospho)-D-glucose.. Its pathway is glycan metabolism; osmoregulated periplasmic glucan (OPG) biosynthesis. Transfers a phosphoglycerol residue from phosphatidylglycerol to the membrane-bound nascent glucan backbones. This chain is Phosphoglycerol transferase I, found in Salmonella newport (strain SL254).